The following is a 333-amino-acid chain: L-lactate dehydrogenase B chain (333 aa).

NAD(+)-binding positions include 29–57 and Arg-99; that span reads GQVG…IEDK. Positions 106, 138, and 169 each coordinate substrate. Asn-138 contacts NAD(+). Catalysis depends on His-193, which acts as the Proton acceptor. Thr-248 provides a ligand contact to substrate.

The protein belongs to the LDH/MDH superfamily. LDH family. In terms of assembly, homotetramer.

It localises to the cytoplasm. The enzyme catalyses (S)-lactate + NAD(+) = pyruvate + NADH + H(+). Its pathway is fermentation; pyruvate fermentation to lactate; (S)-lactate from pyruvate: step 1/1. Functionally, interconverts simultaneously and stereospecifically pyruvate and lactate with concomitant interconversion of NADH and NAD(+). The protein is L-lactate dehydrogenase B chain (ldhb) of Anguilla rostrata (American eel).